A 151-amino-acid polypeptide reads, in one-letter code: tRNA-specific adenosine deaminase (151 aa).

Positions 1-111 constitute a CMP/dCMP-type deaminase domain; it reads MGKEYFLKVA…LDKKHGGVVS (111 aa). Position 52 (His-52) interacts with Zn(2+). Residue Glu-54 is the Proton donor of the active site. 2 residues coordinate Zn(2+): Cys-82 and Cys-85.

This sequence belongs to the cytidine and deoxycytidylate deaminase family. In terms of assembly, homodimer. Zn(2+) serves as cofactor.

It catalyses the reaction adenosine(34) in tRNA + H2O + H(+) = inosine(34) in tRNA + NH4(+). Functionally, catalyzes the deamination of adenosine to inosine at the wobble position 34 of tRNA(Arg2). This Aquifex aeolicus (strain VF5) protein is tRNA-specific adenosine deaminase.